A 201-amino-acid polypeptide reads, in one-letter code: Holliday junction branch migration complex subunit RuvA (201 aa).

The domain I stretch occupies residues 1-63 (MYDYIKGIVK…EDNISLFGFQ (63 aa)). Residues 64–142 (STEERYLFKK…DVVASEIVYK (79 aa)) form a domain II region. The interval 143–153 (AAENDIVTGLS) is flexible linker. Positions 153–201 (SPQLEEAVLALEALGYSTRELKKVIPKMAKENDLTSDAYIKLALRLMTK) are domain III.

This sequence belongs to the RuvA family. In terms of assembly, homotetramer. Forms an RuvA(8)-RuvB(12)-Holliday junction (HJ) complex. HJ DNA is sandwiched between 2 RuvA tetramers; dsDNA enters through RuvA and exits via RuvB. An RuvB hexamer assembles on each DNA strand where it exits the tetramer. Each RuvB hexamer is contacted by two RuvA subunits (via domain III) on 2 adjacent RuvB subunits; this complex drives branch migration. In the full resolvosome a probable DNA-RuvA(4)-RuvB(12)-RuvC(2) complex forms which resolves the HJ.

It localises to the cytoplasm. The RuvA-RuvB-RuvC complex processes Holliday junction (HJ) DNA during genetic recombination and DNA repair, while the RuvA-RuvB complex plays an important role in the rescue of blocked DNA replication forks via replication fork reversal (RFR). RuvA specifically binds to HJ cruciform DNA, conferring on it an open structure. The RuvB hexamer acts as an ATP-dependent pump, pulling dsDNA into and through the RuvAB complex. HJ branch migration allows RuvC to scan DNA until it finds its consensus sequence, where it cleaves and resolves the cruciform DNA. The polypeptide is Holliday junction branch migration complex subunit RuvA (Listeria innocua serovar 6a (strain ATCC BAA-680 / CLIP 11262)).